The sequence spans 388 residues: Beta-hexosaminidase LpqI (388 aa).

Residues 1–19 (MAFPRTLAILAAAAALVVA) form the signal peptide. Cys-20 carries N-palmitoyl cysteine lipidation. A lipid anchor (S-diacylglycerol cysteine) is attached at Cys-20. Substrate is bound by residues Asp-123, Arg-131, Arg-193, and 223–224 (KH). Catalysis depends on His-236, which acts as the Proton donor/acceptor. Asp-311 acts as the Nucleophile in catalysis.

Belongs to the glycosyl hydrolase 3 family.

The protein resides in the cell inner membrane. It carries out the reaction Hydrolysis of terminal non-reducing N-acetyl-D-hexosamine residues in N-acetyl-beta-D-hexosaminides.. It participates in cell wall biogenesis; peptidoglycan recycling. Its function is as follows. Plays a role in peptidoglycan recycling by cleaving the terminal beta-1,4-linked N-acetylglucosamine (GlcNAc) from peptidoglycan fragments. Acts as a regulator for GlcNAc-MurNAc levels by cleaving disaccharides and allowing the breakdown of MurNAc. This chain is Beta-hexosaminidase LpqI, found in Mycobacterium bovis (strain BCG / Pasteur 1173P2).